Here is a 467-residue protein sequence, read N- to C-terminus: MATGKIVQIIGAVVDVEFPQSEVPSVYDALNVVDSKERLVLEVQQQLGGGVIRAIVMGSSDGLRRGMTVQNTGAPISVPVGTKTLGRIMNVLGDAIDERGDIGAEEVYSIHRPAPSYEEQSSATELLETGVKVIDLICPFAKGGKIGLFGGAGVGKTVNMMELINNIALQHSGLSVFAGVGERTREGNDFYHEMQEAGVVNVEQPELSKVAMVYGQMNEPPGNRLRVALTGLTMAEKFRDEGRDVLLFIDNIYRYTLAGTEVSALLGRMPSAVGYQPTLAEEMGVLQERITSTKKGSITSVQAVYVPADDLTDPSPATTFAHLDATVVLNRNIAAMGLYPAIDPLDSTSRQLDPLVVGQEHYDVARGVQATLQRYKELKDIIAILGMDELSEADKQVVARARKIERFLTQPYHVAEVFTGDPGVYVPLKETLRGFKGLLAGDYDDIPEQAFMYCGTIDDAIENAKKL.

Residue 150–157 (GGAGVGKT) coordinates ATP.

Belongs to the ATPase alpha/beta chains family. In terms of assembly, F-type ATPases have 2 components, CF(1) - the catalytic core - and CF(0) - the membrane proton channel. CF(1) has five subunits: alpha(3), beta(3), gamma(1), delta(1), epsilon(1). CF(0) has three main subunits: a(1), b(2) and c(9-12). The alpha and beta chains form an alternating ring which encloses part of the gamma chain. CF(1) is attached to CF(0) by a central stalk formed by the gamma and epsilon chains, while a peripheral stalk is formed by the delta and b chains.

The protein localises to the cell inner membrane. The catalysed reaction is ATP + H2O + 4 H(+)(in) = ADP + phosphate + 5 H(+)(out). In terms of biological role, produces ATP from ADP in the presence of a proton gradient across the membrane. The catalytic sites are hosted primarily by the beta subunits. The protein is ATP synthase subunit beta of Vibrio cholerae serotype O1 (strain ATCC 39541 / Classical Ogawa 395 / O395).